Here is a 492-residue protein sequence, read N- to C-terminus: RNA helicase CrhR (492 aa).

The Q motif signature appears at 7-35 (STFADLGLSEKRCQLLADIGFEAPTQIQT). The 170-residue stretch at 38 to 207 (IPLLLSGRDM…NQFLNDPALV (170 aa)) folds into the Helicase ATP-binding domain. 51–58 (SQTGTGKT) is a binding site for ATP. A DEAD box motif is present at residues 155 to 158 (DEAD). The 146-residue stretch at 234-379 (KALQPILEME…VCTIPNRSQV (146 aa)) folds into the Helicase C-terminal domain. The disordered stretch occupies residues 451-492 (VLRRGRNAGGGQNKSGGGYQGKPGKPRRSSGGRRPAYSDRQQ). The span at 457–471 (NAGGGQNKSGGGYQG) shows a compositional bias: gly residues.

It belongs to the DEAD box helicase family.

It localises to the cytoplasm. Its subcellular location is the cell inner membrane. It is found in the cellular thylakoid membrane. It carries out the reaction ATP + H2O = ADP + phosphate + H(+). Its activity is regulated as follows. Helicase inhibited by the slowly-hydrolyzing ATP analog ATP-gamma-S. Protein is rapidly degraded upon shifting from 20 to 30 degrees Celsius, the degradation machinery is only transiently present in cells grown at 30 degrees Celsius, is inhibited by commercial protease inhibitors and requires full-length protein expression (the N-terminal fragment does not induce proteolysis although it can be degraded by wild-type extract). Its function is as follows. An ATP-dependent bidirectional RNA helicase with RNA-dependent ATPase activity; does not unwind dsDNA, uses only (d)ATP. Also has ATP-dependent RNA annealing activity; concurrent annealing and helicase activity promote strand-exchange activity. In vitro has low helicase processivity, annealing processivity is probably higher. Required for correct cold adaptation, probably by aiding translation of mRNAs required for photosynthesis and electron transport. Probably regulates the cold-shock-inducible expression of the GroESL chaperones. May partially regulate its own expression at both the transcriptional and post-transcriptional level (experiments used a construct expressing a 25 kDa trunacted protein which might have dominant-negative effects); is probably not directly involved in the pathway responsible for mRNA degradation. The protein is RNA helicase CrhR of Synechocystis sp. (strain ATCC 27184 / PCC 6803 / Kazusa).